The chain runs to 78 residues: Large ribosomal subunit protein eL38 (78 aa).

Belongs to the eukaryotic ribosomal protein eL38 family. As to quaternary structure, component of the large ribosomal subunit (LSU). Mature yeast ribosomes consist of a small (40S) and a large (60S) subunit. The 40S small subunit contains 1 molecule of ribosomal RNA (18S rRNA) and 33 different proteins (encoded by 57 genes). The large 60S subunit contains 3 rRNA molecules (25S, 5.8S and 5S rRNA) and 46 different proteins (encoded by 81 genes).

It localises to the cytoplasm. Functionally, component of the ribosome, a large ribonucleoprotein complex responsible for the synthesis of proteins in the cell. The small ribosomal subunit (SSU) binds messenger RNAs (mRNAs) and translates the encoded message by selecting cognate aminoacyl-transfer RNA (tRNA) molecules. The large subunit (LSU) contains the ribosomal catalytic site termed the peptidyl transferase center (PTC), which catalyzes the formation of peptide bonds, thereby polymerizing the amino acids delivered by tRNAs into a polypeptide chain. The nascent polypeptides leave the ribosome through a tunnel in the LSU and interact with protein factors that function in enzymatic processing, targeting, and the membrane insertion of nascent chains at the exit of the ribosomal tunnel. The polypeptide is Large ribosomal subunit protein eL38 (Saccharomyces cerevisiae (strain ATCC 204508 / S288c) (Baker's yeast)).